The chain runs to 219 residues: UPF0619 GPI-anchored membrane protein AFUA_3G00880 (219 aa).

Positions 1–16 (MRFALTLTAFVGSVAA) are cleaved as a signal peptide. The N-linked (GlcNAc...) asparagine glycan is linked to Asn85. Disordered stretches follow at residues 107–144 (SQQF…GTVS) and 160–205 (SSTL…SLTV). A compositionally biased stretch (low complexity) spans 114–144 (SSGSSTTSDSTSSASATGSASTSSSSTGTVS). The GPI-like-anchor amidated asparagine moiety is linked to residue Asn198. A propeptide spans 199–219 (GAGSLTVPAGSLLLGLVALAL) (removed in mature form).

This sequence belongs to the UPF0619 family. The GPI-like anchor contains a phosphoceramide lipid group. The anchor position has not been determined.

The protein resides in the cell membrane. This chain is UPF0619 GPI-anchored membrane protein AFUA_3G00880, found in Aspergillus fumigatus (strain ATCC MYA-4609 / CBS 101355 / FGSC A1100 / Af293) (Neosartorya fumigata).